A 173-amino-acid polypeptide reads, in one-letter code: Crossover junction endodeoxyribonuclease RuvC (173 aa).

Catalysis depends on residues Asp8, Glu68, and Asp140. Mg(2+)-binding residues include Asp8, Glu68, and Asp140.

Belongs to the RuvC family. In terms of assembly, homodimer which binds Holliday junction (HJ) DNA. The HJ becomes 2-fold symmetrical on binding to RuvC with unstacked arms; it has a different conformation from HJ DNA in complex with RuvA. In the full resolvosome a probable DNA-RuvA(4)-RuvB(12)-RuvC(2) complex forms which resolves the HJ. Mg(2+) serves as cofactor.

The protein localises to the cytoplasm. It carries out the reaction Endonucleolytic cleavage at a junction such as a reciprocal single-stranded crossover between two homologous DNA duplexes (Holliday junction).. Its function is as follows. The RuvA-RuvB-RuvC complex processes Holliday junction (HJ) DNA during genetic recombination and DNA repair. Endonuclease that resolves HJ intermediates. Cleaves cruciform DNA by making single-stranded nicks across the HJ at symmetrical positions within the homologous arms, yielding a 5'-phosphate and a 3'-hydroxyl group; requires a central core of homology in the junction. The consensus cleavage sequence is 5'-(A/T)TT(C/G)-3'. Cleavage occurs on the 3'-side of the TT dinucleotide at the point of strand exchange. HJ branch migration catalyzed by RuvA-RuvB allows RuvC to scan DNA until it finds its consensus sequence, where it cleaves and resolves the cruciform DNA. The polypeptide is Crossover junction endodeoxyribonuclease RuvC (Saccharophagus degradans (strain 2-40 / ATCC 43961 / DSM 17024)).